The primary structure comprises 403 residues: Phosphoglycerate kinase (403 aa).

Residues 21–23 (DFN), Arg36, 59–62 (HLGR), Arg119, and Arg154 each bind substrate. Residues Lys207, Gly299, Glu330, and 357–360 (GGDA) contribute to the ATP site.

The protein belongs to the phosphoglycerate kinase family. Monomer.

The protein resides in the cytoplasm. It catalyses the reaction (2R)-3-phosphoglycerate + ATP = (2R)-3-phospho-glyceroyl phosphate + ADP. The protein operates within carbohydrate degradation; glycolysis; pyruvate from D-glyceraldehyde 3-phosphate: step 2/5. The sequence is that of Phosphoglycerate kinase from Chlamydia abortus (strain DSM 27085 / S26/3) (Chlamydophila abortus).